A 426-amino-acid chain; its full sequence is Glutamate-1-semialdehyde 2,1-aminomutase (426 aa).

Lys-265 carries the post-translational modification N6-(pyridoxal phosphate)lysine.

The protein belongs to the class-III pyridoxal-phosphate-dependent aminotransferase family. HemL subfamily. In terms of assembly, homodimer. Pyridoxal 5'-phosphate is required as a cofactor.

It is found in the cytoplasm. The enzyme catalyses (S)-4-amino-5-oxopentanoate = 5-aminolevulinate. It functions in the pathway porphyrin-containing compound metabolism; protoporphyrin-IX biosynthesis; 5-aminolevulinate from L-glutamyl-tRNA(Glu): step 2/2. The protein is Glutamate-1-semialdehyde 2,1-aminomutase of Neisseria gonorrhoeae (strain ATCC 700825 / FA 1090).